A 201-amino-acid chain; its full sequence is Recombination protein RecR (201 aa).

A C4-type zinc finger spans residues 60–75 (CSCCGNVDTSDPCTIC). The region spanning 83–178 (ATLIVVEDVS…RVTRLAHGVP (96 aa)) is the Toprim domain.

The protein belongs to the RecR family.

Functionally, may play a role in DNA repair. It seems to be involved in an RecBC-independent recombinational process of DNA repair. It may act with RecF and RecO. This is Recombination protein RecR from Brucella melitensis biotype 1 (strain ATCC 23456 / CCUG 17765 / NCTC 10094 / 16M).